The chain runs to 310 residues: MKITVIGAGNVGATATQRIVEKQLAREVVLVDVVDGVPQGKALDMYESAPVELFDTRVVGTTGYEETAGSDIILITAGRPRKPGMSRDDLLAMNTEIVKTVTEEAVSKSPNAIIIVVSNPLDVMTYVAYVRSGFPKERVIGMAGVLDTARFRTFIAMELNVSVQDVNAFVLGGHGDSMVPVVKYTTVAGIPISELLPQDRIAALVDRARKGGIEIVNYLKTGSAYYAPSASAVEMIDAIVNDRKRIMPCSAYVTGQYGLNDVFVGVPVKLGRGGVEQVLEINLDEADRNALQASANEVKESCEKVNSMMQ.

Residues G7–G12 and D32 contribute to the NAD(+) site. 2 residues coordinate substrate: R81 and R87. Residues N94 and V117–N119 contribute to the NAD(+) site. Substrate contacts are provided by N119 and R150. Residue H174 is the Proton acceptor of the active site.

It belongs to the LDH/MDH superfamily. MDH type 3 family.

It catalyses the reaction (S)-malate + NAD(+) = oxaloacetate + NADH + H(+). Its function is as follows. Catalyzes the reversible oxidation of malate to oxaloacetate. The sequence is that of Malate dehydrogenase from Chloroherpeton thalassium (strain ATCC 35110 / GB-78).